The following is a 450-amino-acid chain: Phosphoglucosamine mutase (450 aa).

The Phosphoserine intermediate role is filled by serine 101. Mg(2+) is bound by residues serine 101, aspartate 241, aspartate 243, and aspartate 245. The residue at position 101 (serine 101) is a Phosphoserine.

Belongs to the phosphohexose mutase family. Requires Mg(2+) as cofactor. Activated by phosphorylation.

The catalysed reaction is alpha-D-glucosamine 1-phosphate = D-glucosamine 6-phosphate. Catalyzes the conversion of glucosamine-6-phosphate to glucosamine-1-phosphate. This chain is Phosphoglucosamine mutase, found in Listeria monocytogenes serovar 1/2a (strain ATCC BAA-679 / EGD-e).